The following is a 511-amino-acid chain: ATP synthase subunit alpha, plastid (511 aa).

170-177 serves as a coordination point for ATP; it reads GDRQTGKT.

This sequence belongs to the ATPase alpha/beta chains family. As to quaternary structure, F-type ATPases have 2 components, CF(1) - the catalytic core - and CF(0) - the membrane proton channel. CF(1) has five subunits: alpha(3), beta(3), gamma(1), delta(1), epsilon(1). CF(0) has four main subunits: a, b, b' and c.

It is found in the plastid membrane. The catalysed reaction is ATP + H2O + 4 H(+)(in) = ADP + phosphate + 5 H(+)(out). Functionally, produces ATP from ADP in the presence of a proton gradient across the membrane. The alpha chain is a regulatory subunit. In Cuscuta reflexa (Southern Asian dodder), this protein is ATP synthase subunit alpha, plastid.